Reading from the N-terminus, the 485-residue chain is ATP-dependent protease ATPase subunit HslU (485 aa).

ATP is bound by residues Ile-22 and 64–69; that span reads GVGKTE. The disordered stretch occupies residues 146 to 189; sequence KKTAATSAQPQDVSQASSGTTISLPSVSSTAQAEEHKAQNENDM. Residues 149 to 177 are compositionally biased toward polar residues; the sequence is AATSAQPQDVSQASSGTTISLPSVSSTAQ. The segment covering 178–189 has biased composition (basic and acidic residues); that stretch reads AEEHKAQNENDM. Positions 297, 363, and 435 each coordinate ATP.

The protein belongs to the ClpX chaperone family. HslU subfamily. A double ring-shaped homohexamer of HslV is capped on each side by a ring-shaped HslU homohexamer. The assembly of the HslU/HslV complex is dependent on binding of ATP.

It is found in the cytoplasm. ATPase subunit of a proteasome-like degradation complex; this subunit has chaperone activity. The binding of ATP and its subsequent hydrolysis by HslU are essential for unfolding of protein substrates subsequently hydrolyzed by HslV. HslU recognizes the N-terminal part of its protein substrates and unfolds these before they are guided to HslV for hydrolysis. The sequence is that of ATP-dependent protease ATPase subunit HslU from Treponema denticola (strain ATCC 35405 / DSM 14222 / CIP 103919 / JCM 8153 / KCTC 15104).